Here is a 232-residue protein sequence, read N- to C-terminus: Phosphoribosylformylglycinamidine synthase subunit PurQ (232 aa).

Residues 2–232 (RIGVITFPGS…SVVRSTLVEA (231 aa)) form the Glutamine amidotransferase type-1 domain. Catalysis depends on C85, which acts as the Nucleophile. Catalysis depends on residues H194 and E196.

In terms of assembly, part of the FGAM synthase complex composed of 1 PurL, 1 PurQ and 2 PurS subunits.

Its subcellular location is the cytoplasm. The enzyme catalyses N(2)-formyl-N(1)-(5-phospho-beta-D-ribosyl)glycinamide + L-glutamine + ATP + H2O = 2-formamido-N(1)-(5-O-phospho-beta-D-ribosyl)acetamidine + L-glutamate + ADP + phosphate + H(+). It carries out the reaction L-glutamine + H2O = L-glutamate + NH4(+). It functions in the pathway purine metabolism; IMP biosynthesis via de novo pathway; 5-amino-1-(5-phospho-D-ribosyl)imidazole from N(2)-formyl-N(1)-(5-phospho-D-ribosyl)glycinamide: step 1/2. Its function is as follows. Part of the phosphoribosylformylglycinamidine synthase complex involved in the purines biosynthetic pathway. Catalyzes the ATP-dependent conversion of formylglycinamide ribonucleotide (FGAR) and glutamine to yield formylglycinamidine ribonucleotide (FGAM) and glutamate. The FGAM synthase complex is composed of three subunits. PurQ produces an ammonia molecule by converting glutamine to glutamate. PurL transfers the ammonia molecule to FGAR to form FGAM in an ATP-dependent manner. PurS interacts with PurQ and PurL and is thought to assist in the transfer of the ammonia molecule from PurQ to PurL. This Leifsonia xyli subsp. xyli (strain CTCB07) protein is Phosphoribosylformylglycinamidine synthase subunit PurQ.